Consider the following 367-residue polypeptide: Small ribosomal subunit protein uS2 (367 aa).

Positions 1–68 (MPKKAEAKTG…NSTPSTGSKF (68 aa)) are disordered. Positions 21–40 (AKKDVKAEVNETNKTAEKVS) are enriched in basic and acidic residues. Residues 53 to 66 (TNESSSNSTPSTGS) are compositionally biased toward low complexity.

This sequence belongs to the universal ribosomal protein uS2 family.

In Malacoplasma penetrans (strain HF-2) (Mycoplasma penetrans), this protein is Small ribosomal subunit protein uS2.